The primary structure comprises 461 residues: Asparagine--tRNA ligase (461 aa).

This sequence belongs to the class-II aminoacyl-tRNA synthetase family. As to quaternary structure, homodimer.

Its subcellular location is the cytoplasm. The catalysed reaction is tRNA(Asn) + L-asparagine + ATP = L-asparaginyl-tRNA(Asn) + AMP + diphosphate + H(+). This Solibacter usitatus (strain Ellin6076) protein is Asparagine--tRNA ligase.